Consider the following 401-residue polypeptide: Probable tRNA sulfurtransferase (401 aa).

The THUMP domain occupies 60 to 165 (EALFPHLKQV…EEATFLTIRD (106 aa)). Residues 183–184 (ML), 208–209 (HF), arginine 265, glycine 287, and glutamine 296 each bind ATP.

This sequence belongs to the ThiI family.

The protein localises to the cytoplasm. It carries out the reaction [ThiI sulfur-carrier protein]-S-sulfanyl-L-cysteine + a uridine in tRNA + 2 reduced [2Fe-2S]-[ferredoxin] + ATP + H(+) = [ThiI sulfur-carrier protein]-L-cysteine + a 4-thiouridine in tRNA + 2 oxidized [2Fe-2S]-[ferredoxin] + AMP + diphosphate. The enzyme catalyses [ThiS sulfur-carrier protein]-C-terminal Gly-Gly-AMP + S-sulfanyl-L-cysteinyl-[cysteine desulfurase] + AH2 = [ThiS sulfur-carrier protein]-C-terminal-Gly-aminoethanethioate + L-cysteinyl-[cysteine desulfurase] + A + AMP + 2 H(+). It functions in the pathway cofactor biosynthesis; thiamine diphosphate biosynthesis. Functionally, catalyzes the ATP-dependent transfer of a sulfur to tRNA to produce 4-thiouridine in position 8 of tRNAs, which functions as a near-UV photosensor. Also catalyzes the transfer of sulfur to the sulfur carrier protein ThiS, forming ThiS-thiocarboxylate. This is a step in the synthesis of thiazole, in the thiamine biosynthesis pathway. The sulfur is donated as persulfide by IscS. The sequence is that of Probable tRNA sulfurtransferase from Bacillus subtilis (strain 168).